The primary structure comprises 194 residues: ATP-dependent Clp protease proteolytic subunit (194 aa).

The active-site Nucleophile is the Ser-97. Residue His-122 is part of the active site.

It belongs to the peptidase S14 family. As to quaternary structure, fourteen ClpP subunits assemble into 2 heptameric rings which stack back to back to give a disk-like structure with a central cavity, resembling the structure of eukaryotic proteasomes.

It is found in the cytoplasm. It carries out the reaction Hydrolysis of proteins to small peptides in the presence of ATP and magnesium. alpha-casein is the usual test substrate. In the absence of ATP, only oligopeptides shorter than five residues are hydrolyzed (such as succinyl-Leu-Tyr-|-NHMec, and Leu-Tyr-Leu-|-Tyr-Trp, in which cleavage of the -Tyr-|-Leu- and -Tyr-|-Trp bonds also occurs).. Its function is as follows. Cleaves peptides in various proteins in a process that requires ATP hydrolysis. Has a chymotrypsin-like activity. Plays a major role in the degradation of misfolded proteins. The sequence is that of ATP-dependent Clp protease proteolytic subunit from Campylobacter jejuni subsp. jejuni serotype O:23/36 (strain 81-176).